The sequence spans 288 residues: Glucose-1-phosphate thymidylyltransferase (288 aa).

Gly8 is a binding site for dTDP-alpha-D-glucose. Positions 8, 11, 12, 13, 23, 24, 80, 85, and 108 each coordinate dTTP. Residues Lys23, Gln24, Gln80, Gly85, Asp108, Asn109, Gly143, Glu158, Lys159, Val169, and Asp222 each coordinate dTDP-alpha-D-glucose. Residue Asp108 participates in Mg(2+) binding. Asp222 contributes to the Mg(2+) binding site.

This sequence belongs to the glucose-1-phosphate thymidylyltransferase family. Mg(2+) is required as a cofactor.

The enzyme catalyses dTTP + alpha-D-glucose 1-phosphate + H(+) = dTDP-alpha-D-glucose + diphosphate. It participates in carbohydrate biosynthesis; dTDP-L-rhamnose biosynthesis. Functionally, catalyzes the conversion of glucose-1-phosphate and dTTP to dTDP-glucose and pyrophosphate. Involved in the biosynthesis of the dTDP-L-rhamnose which is a component of the critical linker, D-N-acetylglucosamine-L-rhamnose disaccharide, which connects the galactan region of arabinogalactan to peptidoglycan via a phosphodiester linkage. The protein is Glucose-1-phosphate thymidylyltransferase (rmlA) of Mycolicibacterium smegmatis (strain ATCC 700084 / mc(2)155) (Mycobacterium smegmatis).